The primary structure comprises 81 residues: Teretoxin Tsu6.8 (81 aa).

Positions 1 to 21 (MATSGRLLCLCLVLGLIFESL) are cleaved as a signal peptide. The propeptide occupies 22-45 (GHPVMGEKRAGENASPSARSLPKR).

Belongs to the teretoxin M (TM) superfamily. Contains 3 disulfide bonds. In terms of tissue distribution, expressed by the venom duct.

It is found in the secreted. This is Teretoxin Tsu6.8 from Terebra subulata (Chocolate spotted auger).